Here is a 253-residue protein sequence, read N- to C-terminus: DNA polymerase sliding clamp (253 aa).

Belongs to the PCNA family. Homotrimer. The subunits circularize to form a toroid; DNA passes through its center. Replication factor C (RFC) is required to load the toroid on the DNA.

Functionally, sliding clamp subunit that acts as a moving platform for DNA processing. Responsible for tethering the catalytic subunit of DNA polymerase and other proteins to DNA during high-speed replication. This Methanopyrus kandleri (strain AV19 / DSM 6324 / JCM 9639 / NBRC 100938) protein is DNA polymerase sliding clamp.